A 322-amino-acid polypeptide reads, in one-letter code: Cysteine protease YopT (322 aa).

Catalysis depends on residues Cys139, His258, and Asp274.

It belongs to the peptidase C58 family. In terms of assembly, interacts with human ARHA.

It is found in the secreted. In terms of biological role, cysteine protease, which is translocated into infected cells and plays a central role in pathogenesis by cleaving the C-terminus end of the human small GTPase RhoA/ARHA, a regulator of cytoskeleton. Once cleaved, ARHA loses its lipid modification, and is released from the cell membrane, leading to the subsequent disruption of actin cytoskeleton of the host cell. The sequence is that of Cysteine protease YopT (yopT) from Yersinia pestis.